The primary structure comprises 83 residues: ATP synthase subunit c, chloroplastic (83 aa).

A run of 2 helical transmembrane segments spans residues 3–23 (PLIAASSVIAAGLAIGLAAIG) and 57–77 (FAFMESLTIYGLVVALALLFA).

The protein belongs to the ATPase C chain family. F-type ATPases have 2 components, F(1) - the catalytic core - and F(0) - the membrane proton channel. F(1) has five subunits: alpha(3), beta(3), gamma(1), delta(1), epsilon(1). F(0) has four main subunits: a(1), b(1), b'(1) and c(10-14). The alpha and beta chains form an alternating ring which encloses part of the gamma chain. F(1) is attached to F(0) by a central stalk formed by the gamma and epsilon chains, while a peripheral stalk is formed by the delta, b and b' chains.

Its subcellular location is the plastid. It localises to the chloroplast thylakoid membrane. In terms of biological role, f(1)F(0) ATP synthase produces ATP from ADP in the presence of a proton or sodium gradient. F-type ATPases consist of two structural domains, F(1) containing the extramembraneous catalytic core and F(0) containing the membrane proton channel, linked together by a central stalk and a peripheral stalk. During catalysis, ATP synthesis in the catalytic domain of F(1) is coupled via a rotary mechanism of the central stalk subunits to proton translocation. Its function is as follows. Key component of the F(0) channel; it plays a direct role in translocation across the membrane. A homomeric c-ring of between 10-14 subunits forms the central stalk rotor element with the F(1) delta and epsilon subunits. The chain is ATP synthase subunit c, chloroplastic from Oedogonium cardiacum (Filamentous green alga).